Here is a 512-residue protein sequence, read N- to C-terminus: 2,3-bisphosphoglycerate-independent phosphoglycerate mutase (512 aa).

Mn(2+) is bound by residues D11 and S61. S61 functions as the Phosphoserine intermediate in the catalytic mechanism. Substrate is bound by residues H122, 152-153 (RD), R184, R190, 259-262 (RADR), and K332. Mn(2+) contacts are provided by D399, H403, D440, H441, and H459.

Belongs to the BPG-independent phosphoglycerate mutase family. Monomer. It depends on Mn(2+) as a cofactor.

It carries out the reaction (2R)-2-phosphoglycerate = (2R)-3-phosphoglycerate. It participates in carbohydrate degradation; glycolysis; pyruvate from D-glyceraldehyde 3-phosphate: step 3/5. Functionally, catalyzes the interconversion of 2-phosphoglycerate and 3-phosphoglycerate. The protein is 2,3-bisphosphoglycerate-independent phosphoglycerate mutase of Francisella tularensis subsp. holarctica (strain FTNF002-00 / FTA).